Consider the following 525-residue polypeptide: GMP synthase [glutamine-hydrolyzing] (525 aa).

The Glutamine amidotransferase type-1 domain occupies Arg9–Leu207. Cys86 serves as the catalytic Nucleophile. Active-site residues include His181 and Glu183. The region spanning Trp208–Arg400 is the GMPS ATP-PPase domain. Ser235–Ser241 provides a ligand contact to ATP.

Homodimer.

The enzyme catalyses XMP + L-glutamine + ATP + H2O = GMP + L-glutamate + AMP + diphosphate + 2 H(+). It functions in the pathway purine metabolism; GMP biosynthesis; GMP from XMP (L-Gln route): step 1/1. In terms of biological role, catalyzes the synthesis of GMP from XMP. The sequence is that of GMP synthase [glutamine-hydrolyzing] from Yersinia pestis bv. Antiqua (strain Antiqua).